Reading from the N-terminus, the 145-residue chain is D-aminoacyl-tRNA deacylase (145 aa).

The Gly-cisPro motif, important for rejection of L-amino acids signature appears at 137 to 138 (GP).

It belongs to the DTD family. As to quaternary structure, homodimer.

It localises to the cytoplasm. The catalysed reaction is glycyl-tRNA(Ala) + H2O = tRNA(Ala) + glycine + H(+). It carries out the reaction a D-aminoacyl-tRNA + H2O = a tRNA + a D-alpha-amino acid + H(+). In terms of biological role, an aminoacyl-tRNA editing enzyme that deacylates mischarged D-aminoacyl-tRNAs. Also deacylates mischarged glycyl-tRNA(Ala), protecting cells against glycine mischarging by AlaRS. Acts via tRNA-based rather than protein-based catalysis; rejects L-amino acids rather than detecting D-amino acids in the active site. By recycling D-aminoacyl-tRNA to D-amino acids and free tRNA molecules, this enzyme counteracts the toxicity associated with the formation of D-aminoacyl-tRNA entities in vivo and helps enforce protein L-homochirality. In Shewanella amazonensis (strain ATCC BAA-1098 / SB2B), this protein is D-aminoacyl-tRNA deacylase.